Consider the following 421-residue polypeptide: Probable G-protein coupled receptor 151 (421 aa).

Over 1–44 (MGKATLAVFADSDSSNMNESFAHLHFAGGYLPSDSKGWRTIIPS) the chain is Extracellular. An N-linked (GlcNAc...) asparagine glycan is attached at Asn-18. A helical membrane pass occupies residues 45–65 (LLAAVCLVGFVGNLCVIGLLL). Over 66 to 74 (HGVWKRKPS) the chain is Cytoplasmic. Residues 75-95 (MIHSLILNLSLADISLLLFSA) traverse the membrane as a helical segment. The Extracellular segment spans residues 96 to 122 (PVRATAYVKGVWDLGWFVCKSSDWFTH). The cysteines at positions 114 and 190 are disulfide-linked. The helical transmembrane segment at 123 to 143 (MCMAAKSLTFVVVAKVCFMYA) threads the bilayer. Over 144 to 156 (SDPAKPVGTHNCT) the chain is Cytoplasmic. A helical membrane pass occupies residues 157-177 (IWSLLGAIWVVASLLPLPEWF). Residues 178 to 204 (FSTTRHHAGVEMCLVDVPAVAAEFMSL) lie on the Extracellular side of the membrane. A helical membrane pass occupies residues 205 to 225 (FGKLYPLLVFCLPLLLAGFYF). At 226 to 258 (WRAYNQCKIRCAKTQNLRNQMRSKQLTVMLLST) the chain is on the cytoplasmic side. Residues 259 to 279 (AVTSALLWLPEWIAWLWVWHL) traverse the membrane as a helical segment. Residues 280 to 289 (KAGGPMPPQG) lie on the Extracellular side of the membrane. A helical transmembrane segment spans residues 290–310 (FIALSQVLMFSISTVNPLIFL). The Cytoplasmic portion of the chain corresponds to 311–421 (MMSEEFKAGL…HEGQETKGCN (111 aa)). Disordered regions lie at residues 346–381 (IETLPGKAPSPETQTCIPDTDRCGSPDSSKETTDKV) and 394–421 (HERDVGPSAQDNDPIPWEHEGQETKGCN). 2 stretches are compositionally biased toward basic and acidic residues: residues 364–379 (DTDRCGSPDSSKETTD) and 409–421 (PWEHEGQETKGCN).

It belongs to the G-protein coupled receptor 1 family. Exclusively expressed in neurons of the habenular complex. The expression is particularly prominent in the medial habenular nucleus, whereas the lateral habenular nucleus exhibited a lower level of expression.

The protein resides in the cell membrane. Orphan receptor. The polypeptide is Probable G-protein coupled receptor 151 (Gpr151) (Rattus norvegicus (Rat)).